Here is a 716-residue protein sequence, read N- to C-terminus: MKIGRDELVFETGFMAKQANGSVLATYGGSSVLATVCCSSNVREDLDFVPLSVEYNEKYYAAGKIPGGFIKREGKPKDKEILVSRLIDRPMRPLFDKRFGREIQVIPTTLATDQLNPPDIVGMNAAFTAVFLSDIPFNGPIAAVRMVYLNGKFIVNPSFEEIHDSDLDIVVAGSLNGITMVEGGANEVGEDILLSAIDGAHEYIKQICNAQKEFLDIVGKKEKLPLAFEEKIFEFKDELRDFVYADLKEACFVKGKLNRDKAITLLRNKSYEYFSSLEKLTDSNESLFHKAFDDFEKEIVRSSILNDNIRTDGRTPNEIRDIISEVDILSRTHGSALFTRGETQALAVTTLGTSIDEQIMDDIDGDKRLNFMLHYNFPPFSVGETGRLMTGRREIGHGHLAQRALESMVPGKNDFPYTIRVVSEVLESNGSSSMATVCAGSMSLMSAGVPVKGQVAGIAMGLISEGDKYVVLSDILGEEDHLGDMDFKVAGTKNGITGFQMDIKIENVTKDLMRDALEQARIGRIHILSIMNTVISNSRVGISKYAPKIVQLQIDIDKISLVIGSTGKTVKAITDEFEVKVQIEQNGKIILFGDDDFKMQKAKERIESIVREPKVGEIYEGTVKKINSFGAFIELTPAKEGFLSTRLKPRDSKYGSGRFGNSNRYSRFGGGGENIRGNAGLVRPPKLEEGQRIKVKIIDIDKFGKIDLEIVRDKDY.

Residues D480 and D486 each coordinate Mg(2+). A KH domain is found at P547–I606. The S1 motif domain maps to G616–V711.

This sequence belongs to the polyribonucleotide nucleotidyltransferase family. The cofactor is Mg(2+).

It is found in the cytoplasm. It catalyses the reaction RNA(n+1) + phosphate = RNA(n) + a ribonucleoside 5'-diphosphate. In terms of biological role, involved in mRNA degradation. Catalyzes the phosphorolysis of single-stranded polyribonucleotides processively in the 3'- to 5'-direction. This is Polyribonucleotide nucleotidyltransferase from Borreliella burgdorferi (strain ATCC 35210 / DSM 4680 / CIP 102532 / B31) (Borrelia burgdorferi).